Consider the following 248-residue polypeptide: Aspartate/glutamate leucyltransferase (248 aa).

It belongs to the R-transferase family. Bpt subfamily.

The protein resides in the cytoplasm. The enzyme catalyses N-terminal L-glutamyl-[protein] + L-leucyl-tRNA(Leu) = N-terminal L-leucyl-L-glutamyl-[protein] + tRNA(Leu) + H(+). It catalyses the reaction N-terminal L-aspartyl-[protein] + L-leucyl-tRNA(Leu) = N-terminal L-leucyl-L-aspartyl-[protein] + tRNA(Leu) + H(+). Functions in the N-end rule pathway of protein degradation where it conjugates Leu from its aminoacyl-tRNA to the N-termini of proteins containing an N-terminal aspartate or glutamate. The sequence is that of Aspartate/glutamate leucyltransferase from Methylobacterium sp. (strain 4-46).